A 248-amino-acid chain; its full sequence is Adenosylcobinamide-GDP ribazoletransferase (248 aa).

7 helical membrane-spanning segments follow: residues 24–44, 70–90, 106–126, 134–154, 168–188, 189–209, and 228–248; these read EINLKKGSALLPFVGVIIGAW, VIITGGFHVDALADTADGLFS, VGANGVIAICFYFLFYGALFL, ICWLFFVLPIVAKGVTMLLFA, IFLGVPWWPIVIAQVIVLAVL, GLFFSYVGVIAYVGVILFTII, and AGGQMGQLICLFCLVLLWGLV.

It belongs to the CobS family. The cofactor is Mg(2+).

The protein localises to the cell membrane. It catalyses the reaction alpha-ribazole + adenosylcob(III)inamide-GDP = adenosylcob(III)alamin + GMP + H(+). The catalysed reaction is alpha-ribazole 5'-phosphate + adenosylcob(III)inamide-GDP = adenosylcob(III)alamin 5'-phosphate + GMP + H(+). The protein operates within cofactor biosynthesis; adenosylcobalamin biosynthesis; adenosylcobalamin from cob(II)yrinate a,c-diamide: step 7/7. In terms of biological role, joins adenosylcobinamide-GDP and alpha-ribazole to generate adenosylcobalamin (Ado-cobalamin). Also synthesizes adenosylcobalamin 5'-phosphate from adenosylcobinamide-GDP and alpha-ribazole 5'-phosphate. The sequence is that of Adenosylcobinamide-GDP ribazoletransferase from Listeria monocytogenes serovar 1/2a (strain ATCC BAA-679 / EGD-e).